A 208-amino-acid chain; its full sequence is Outer-membrane lipoprotein carrier protein (208 aa).

Positions 1–22 (MLKPLSQLVCALPLVVAASSYA) are cleaved as a signal peptide.

This sequence belongs to the LolA family. Monomer.

The protein localises to the periplasm. Its function is as follows. Participates in the translocation of lipoproteins from the inner membrane to the outer membrane. Only forms a complex with a lipoprotein if the residue after the N-terminal Cys is not an aspartate (The Asp acts as a targeting signal to indicate that the lipoprotein should stay in the inner membrane). The protein is Outer-membrane lipoprotein carrier protein of Shewanella loihica (strain ATCC BAA-1088 / PV-4).